The primary structure comprises 875 residues: Alanine--tRNA ligase (875 aa).

Zn(2+) is bound by residues histidine 564, histidine 568, cysteine 666, and histidine 670.

It belongs to the class-II aminoacyl-tRNA synthetase family. Homotetramer. The cofactor is Zn(2+).

It localises to the cytoplasm. It carries out the reaction tRNA(Ala) + L-alanine + ATP = L-alanyl-tRNA(Ala) + AMP + diphosphate. Functionally, catalyzes the attachment of alanine to tRNA(Ala) in a two-step reaction: alanine is first activated by ATP to form Ala-AMP and then transferred to the acceptor end of tRNA(Ala). Also edits incorrectly charged Ser-tRNA(Ala) and Gly-tRNA(Ala) via its editing domain. This chain is Alanine--tRNA ligase, found in Sodalis glossinidius (strain morsitans).